Here is a 189-residue protein sequence, read N- to C-terminus: SAAASAARRARLLNLLFARSSAAAAASAAASAGAGSGSGGFGLGSRFLGGGRGGSRAAASAVASAGASARGGGGGGGGSSSAAAAAAAAAAAARNANLRGWLVASGVGAGAGAGAGAGAGAGAGAGAGAGGGSGGGGGGGSGSGGSGGSGGSGGSGGNDGNDGNDGSSSRGVKLYAYDYYKDDKKGSND.

Residues 127–160 show a composition bias toward gly residues; sequence AGAGGGSGGGGGGGSGSGGSGGSGGSGGSGGNDG. Residues 127 to 170 form a disordered region; that stretch reads AGAGGGSGGGGGGGSGSGGSGGSGGSGGSGGNDGNDGNDGSSSR.

Component of the organic matrix of calcified shell layers like nacre and prisms.

It is found in the secreted. This is Alanine and glycine-rich protein from Mytilus californianus (California mussel).